The chain runs to 193 residues: MFEFITDEDERGQVGIGTLIVFIAMVLVAAIAAGVLINTAGYLQSKGSATGEEASAQVSNRINIVSAYGNVNSEKVDYVNLTVRQAAGADNINLTKSTIQWIGPDKATTLTYSSNSPSSLGENFTTESIKGNNADVLVEQSDRIKVIMYASGVSSTLGSGEEVQLTVTTQYGSKTTYWAHVPESLKDKNAVKL.

A propeptide spanning residues 1-12 (MFEFITDEDERG) is cleaved from the precursor.

The protein belongs to the archaeal flagellin family. In terms of processing, glycosylated.

It localises to the archaeal flagellum. Its function is as follows. Flagellin is the subunit protein which polymerizes to form the filaments of archaeal flagella. This is Flagellin B3 (flaB3) from Halobacterium salinarum (strain ATCC 700922 / JCM 11081 / NRC-1) (Halobacterium halobium).